The primary structure comprises 309 residues: Homoserine O-acetyltransferase (309 aa).

The active-site Acyl-thioester intermediate is C142. Substrate is bound by residues K163 and S192. The active-site Proton acceptor is H235. E237 is a catalytic residue. Residue R249 coordinates substrate.

Belongs to the MetA family.

The protein localises to the cytoplasm. The catalysed reaction is L-homoserine + acetyl-CoA = O-acetyl-L-homoserine + CoA. The protein operates within amino-acid biosynthesis; L-methionine biosynthesis via de novo pathway; O-acetyl-L-homoserine from L-homoserine: step 1/1. In terms of biological role, transfers an acetyl group from acetyl-CoA to L-homoserine, forming acetyl-L-homoserine. In Petrotoga mobilis (strain DSM 10674 / SJ95), this protein is Homoserine O-acetyltransferase.